A 488-amino-acid chain; its full sequence is Alpha-ketoglutaric semialdehyde dehydrogenase (488 aa).

NAD(+)-binding positions include lysine 180 and 233-238; that span reads GSNQVG. Glutamate 255 serves as the catalytic Proton acceptor. The Nucleophile role is filled by cysteine 289. NAD(+)-binding residues include glutamine 336 and glutamate 390.

It belongs to the aldehyde dehydrogenase family. Homotetramer.

The catalysed reaction is 2,5-dioxopentanoate + NADP(+) + H2O = 2-oxoglutarate + NADPH + 2 H(+). The enzyme catalyses 2,5-dioxopentanoate + NAD(+) + H2O = 2-oxoglutarate + NADH + 2 H(+). Catalyzes the NAD(P)(+)-dependent oxidation of alpha-ketoglutaric semialdehyde (alphaKGSA) to alpha-ketoglutarate. Prefers NADP(+) to NAD(+) as a cosubstrate. In vitro, can also use various aldehydes. The protein is Alpha-ketoglutaric semialdehyde dehydrogenase of Bacillus subtilis (strain 168).